A 456-amino-acid chain; its full sequence is MTKLTCFKAYDIRGRLGEELNEDIAWRIGRAYGEYLKPKTVVLGGDVRLTSEALKLALAKGLQDAGVDVLDIGMSGTEEIYFATFHLGVDGGIEVTASHNPMDYNGMKLVREGARPISGDTGLRDVQRLAEAGDFPPVNEAARGSYRQISLRDAYIDHLLGYISVNNLTPLKLVFNAGNGAAGPVIDAIEARLKALGAPVEFIKIHNTPDGTFPNGIPNPLLPECRDDTRKAVIEHGADMGIAFDGDFDRCFLFDEKGQFIEGYYIVGLLAEAFLEKHPGAKIIHDPRLTWNTEAVVTAAGGTPVMSKTGHAFIKERMRTEDAIYGGEMSAHHYFRDFAYCDSGMIPWLLVAELVCLKRQSLGELVRDRMAAFPASGEINSRLAEPAAAIARVEAHFAEEAQAVDRTDGLSMSFADWRFNLRSSNTEPVVRLNVESRGDIPLMEARTRTLLALLNQ.

Ser98 functions as the Phosphoserine intermediate in the catalytic mechanism. Mg(2+)-binding residues include Ser98, Asp245, Asp247, and Asp249.

The protein belongs to the phosphohexose mutase family. Requires Mg(2+) as cofactor.

The enzyme catalyses alpha-D-mannose 1-phosphate = D-mannose 6-phosphate. Its pathway is nucleotide-sugar biosynthesis; GDP-alpha-D-mannose biosynthesis; alpha-D-mannose 1-phosphate from D-fructose 6-phosphate: step 2/2. Functionally, involved in the biosynthesis of the capsular polysaccharide colanic acid. The protein is Phosphomannomutase (manB) of Salmonella typhimurium (strain LT2 / SGSC1412 / ATCC 700720).